The following is a 129-amino-acid chain: Ribonuclease P protein component (129 aa).

Belongs to the RnpA family. In terms of assembly, consists of a catalytic RNA component (M1 or rnpB) and a protein subunit.

The catalysed reaction is Endonucleolytic cleavage of RNA, removing 5'-extranucleotides from tRNA precursor.. Functionally, RNaseP catalyzes the removal of the 5'-leader sequence from pre-tRNA to produce the mature 5'-terminus. It can also cleave other RNA substrates such as 4.5S RNA. The protein component plays an auxiliary but essential role in vivo by binding to the 5'-leader sequence and broadening the substrate specificity of the ribozyme. In Corynebacterium jeikeium (strain K411), this protein is Ribonuclease P protein component.